Consider the following 234-residue polypeptide: SPX domain-containing protein 6 (234 aa).

Residues 1–137 enclose the SPX domain; it reads MKFGKLLKRQ…GGALAAPVAE (137 aa). Residues 202 to 234 are disordered; the sequence is GSSTHGRHSLPPLTLPDSDWLRSFQPPSPIPIQ.

As to expression, predominantly expressed in roots and leaves.

In terms of biological role, may be involved in maintaining cellular Pi homeostasis when plants are exposed to an external change in Pi. The protein is SPX domain-containing protein 6 of Oryza sativa subsp. japonica (Rice).